The sequence spans 176 residues: MSAKQDDTQPIQAASKRLLKVILEGEALTRLSPLQEMDRAQAVADLEAENVFSLERPLPGMTPVSEQGPYVLHLSIQEGRLIFDIRRQDDTFLTVLALALGPFRRLIKDYHLLVDSYVKAVQEAREARIQAIDMGRRGLHNEGAELMRHRLNGKISIDFETARRLFTLVCVLHQRI.

It belongs to the UPF0262 family.

This is UPF0262 protein GbCGDNIH1_1393 from Granulibacter bethesdensis (strain ATCC BAA-1260 / CGDNIH1).